A 232-amino-acid polypeptide reads, in one-letter code: (S)-2-haloacid dehalogenase (232 aa).

The active-site Nucleophile is aspartate 10. An (S)-2-haloacid contacts are provided by residues 11–12 (LY), arginine 41, and 118–119 (SN). The important for catalytic activity stretch occupies residues 175 to 180 (SSNAWD).

Belongs to the HAD-like hydrolase superfamily. S-2-haloalkanoic acid dehalogenase family. In terms of assembly, homodimer.

It carries out the reaction an (S)-2-haloacid + H2O = a (2R)-2-hydroxycarboxylate + a halide anion + H(+). The enzyme catalyses (S)-2-chloropropanoate + H2O = (R)-lactate + chloride + H(+). In terms of biological role, catalyzes the hydrolytic dehalogenation of small (S)-2-haloalkanoic acids to yield the corresponding (R)-2-hydroxyalkanoic acids. Acts on acids of short chain lengths, C(2) to C(4), with inversion of configuration at C-2. Active with 2-halogenated carboxylic acids and converts only the S-isomer (or L-isomer) of 2-chloropropionic acid with inversion of configuration to produce R-lactate (or D-isomer). The chain is (S)-2-haloacid dehalogenase from Pseudomonas sp. (strain YL).